The following is a 287-amino-acid chain: 4,4'-diapophytoene synthase (287 aa).

Residues 18 to 21 (HSKS), Tyr41, and Arg45 each bind (2E,6E)-farnesyl diphosphate. Positions 48 and 52 each coordinate Mg(2+). (2E,6E)-farnesyl diphosphate is bound at residue Gln165. Position 168 (Asn168) interacts with Mg(2+). A (2E,6E)-farnesyl diphosphate-binding site is contributed by Arg171. Residue Asp172 participates in Mg(2+) binding. Tyr248 provides a ligand contact to (2E,6E)-farnesyl diphosphate.

Belongs to the phytoene/squalene synthase family. CrtM subfamily. The cofactor is Mg(2+).

It carries out the reaction 2 (2E,6E)-farnesyl diphosphate = 15-cis-4,4'-diapophytoene + 2 diphosphate. The protein operates within carotenoid biosynthesis; staphyloxanthin biosynthesis; staphyloxanthin from farnesyl diphosphate: step 1/5. Its function is as follows. Involved in the biosynthesis of the yellow-orange carotenoid staphyloxanthin, which plays a role in the virulence via its protective function against oxidative stress. Catalyzes the head-to-head condensation of two molecules of farnesyl diphosphate (FPP) into the colorless C(30) carotenoid 4,4'-diapophytoene (dehydrosqualene). This Staphylococcus aureus protein is 4,4'-diapophytoene synthase.